The sequence spans 811 residues: Metal transporter cnnm-1 (811 aa).

The first 24 residues, 1–24 (MSASCLRLLTLSLFILGQCNVTAA), serve as a signal peptide directing secretion. Residues Asn-20, Asn-49, Asn-61, and Asn-122 are each glycosylated (N-linked (GlcNAc...) asparagine). At 25–204 (QNGVDDEVTT…KEYFLPLPLQ (180 aa)) the chain is on the extracellular side. The CNNM transmembrane domain occupies 197-376 (YFLPLPLQIA…TDNGQVSNEL (180 aa)). The helical transmembrane segment at 205–225 (IACIGFLLCLSALFSGLTLGL) threads the bilayer. At 226–259 (MSLTPQELELVIKSGAIKEQKCAAKILPVRKKGN) the chain is on the cytoplasmic side. Residues 260 to 280 (LLLCSLLLGNVIVNSAISILM) form a helical membrane-spanning segment. At 281–284 (GELT) the chain is on the extracellular side. The chain crosses the membrane as a helical span at residues 285–305 (TGIYALIGSTMGIVIFGEILP). Residues 306–315 (QSICVKKGLE) lie on the Cytoplasmic side of the membrane. A helical transmembrane segment spans residues 316–336 (VGAHTISITQLFIFLTFPIAW). The Extracellular portion of the chain corresponds to 337–811 (PVSKLLDCLL…EEEMALLDQP (475 aa)). 2 consecutive CBS domains span residues 394–456 (MTKI…NFTV) and 462–530 (YHKH…INDE). Residues Asn-435 and Asn-453 are each glycosylated (N-linked (GlcNAc...) asparagine). The segment at 741-760 (DVSHNSSAHNSNLSLVEKPG) is disordered. A compositionally biased stretch (low complexity) spans 743-755 (SHNSSAHNSNLSL). Asn-745 and Asn-752 each carry an N-linked (GlcNAc...) asparagine glycan.

The protein belongs to the ACDP family. Highly expressed in the intestine and in neurons, but it is also expressed in a variety of tissues including the pharynx, hypodermis, rectum and in muscles.

The protein localises to the basolateral cell membrane. In terms of biological role, probable metal transporter. Probably acts redundantly with the other metal transport proteins cnnm-2, cnnm-3, cnnm-4 and cnnm-5 to regulate Mg(2+) homeostasis. Promotes postembryonic gonad development by regulating Mg(2+) levels, probably via AMPK signaling. This Caenorhabditis elegans protein is Metal transporter cnnm-1.